We begin with the raw amino-acid sequence, 509 residues long: Maturase K (509 aa).

It belongs to the intron maturase 2 family. MatK subfamily.

It localises to the plastid. The protein localises to the chloroplast. Usually encoded in the trnK tRNA gene intron. Probably assists in splicing its own and other chloroplast group II introns. This Anthocercis angustifolia (Narrow-leaf ray-flower) protein is Maturase K.